The chain runs to 85 residues: U4-theraphotoxin-Hhn1h (85 aa).

Positions 1 to 22 are cleaved as a signal peptide; sequence MKVTLIAILTCAAVLVLHTTAA. Positions 23–48 are excised as a propeptide; it reads EELEAESQLMEVGMPDTELAAVDEER. 3 cysteine pairs are disulfide-bonded: Cys52/Cys66, Cys56/Cys77, and Cys71/Cys82.

It belongs to the neurotoxin 12 (Hwtx-2) family. 02 (Hwtx-2) subfamily. As to expression, expressed by the venom gland.

The protein localises to the secreted. Functionally, postsynaptic neurotoxin. This chain is U4-theraphotoxin-Hhn1h, found in Cyriopagopus hainanus (Chinese bird spider).